The chain runs to 184 residues: Signal peptidase complex catalytic subunit SEC11 (184 aa).

At 1–28 the chain is on the cytoplasmic side; that stretch reads MDFIKEQYNSLVLDLRKTFRNKRDGLSH. The chain crosses the membrane as a helical; Signal-anchor for type II membrane protein span at residues 29 to 49; that stretch reads ILNVICLLLNALMIWKLLVVF. At 50 to 184 the chain is on the lumenal side; sequence TGCESPVVVV…MLIMILMGYE (135 aa). Catalysis depends on charge relay system residues Ser63, His101, and Asp127. The C-terminal short (CTS) helix stretch occupies residues 170 to 181; the sequence is AIVSIMLIMILM.

It belongs to the peptidase S26B family. Component of the signal peptidase complex (SPC) composed of a catalytic subunit SEC11/SPC21 and three accessory subunits SPC25, SPC3/SPC22, SPC1/SPC12. Within the complex, interacts with SPC25. The complex induces a local thinning of the ER membrane which is used to measure the length of the signal peptide (SP) h-region of protein substrates. This ensures the selectivity of the complex towards h-regions shorter than 18-20 amino acids. The complex interacts with the SEC61 channel-forming translocon complex and is involved in the import of classical signal sequence-containing proteins. Phosphorylated. Phosphorylation increases catalytic activity.

Its subcellular location is the endoplasmic reticulum membrane. The enzyme catalyses Cleavage of hydrophobic, N-terminal signal or leader sequences from secreted and periplasmic proteins.. Phosphorylation increases catalytic activity. Ca(2+) slightly increases catalytic activity in vitro. Catalytic component of the signal peptidase complex (SPC) which catalyzes the cleavage of N-terminal signal sequences from nascent proteins as they are translocated into the lumen of the endoplasmic reticulum. Specifically cleaves N-terminal signal peptides that contain a hydrophobic alpha-helix (h-region) shorter than 18-20 amino acids. The protein is Signal peptidase complex catalytic subunit SEC11 of Plasmodium falciparum (isolate 3D7).